We begin with the raw amino-acid sequence, 299 residues long: Non-homologous end joining protein Ku (299 aa).

Positions 10-188 (ISFGLVHIPV…TEAVTDARLT (179 aa)) constitute a Ku domain. 2 disordered regions span residues 227–249 (AGEG…SADV) and 261–299 (AGKS…GKAS). Residues 273-283 (AAKDKVADKQS) show a composition bias toward basic and acidic residues. The segment covering 284–299 (PKPKRPAVRKKTGKAS) has biased composition (basic residues).

This sequence belongs to the prokaryotic Ku family. In terms of assembly, homodimer. Interacts with LigD.

In terms of biological role, with LigD forms a non-homologous end joining (NHEJ) DNA repair enzyme, which repairs dsDNA breaks with reduced fidelity. Binds linear dsDNA with 5'- and 3'- overhangs but not closed circular dsDNA nor ssDNA. Recruits and stimulates the ligase activity of LigD. This is Non-homologous end joining protein Ku from Pseudomonas syringae pv. tomato (strain ATCC BAA-871 / DC3000).